A 230-amino-acid chain; its full sequence is CRP-like protein Clp (230 aa).

Residue 18–139 (PSLALDAGTI…APKILYAIGV (122 aa)) coordinates a nucleoside 3',5'-cyclic phosphate. The region spanning 158 to 230 (LDVTDRIVRT…GKTVVLYGTR (73 aa)) is the HTH crp-type domain. Residues 190–209 (RQELARLVGCSREMAGRVLK) constitute a DNA-binding region (H-T-H motif).

In terms of assembly, homodimer.

Its subcellular location is the cytoplasm. Its activity is regulated as follows. Allosterically inhibited by cyclic di-GMP (c-di-GMP), which binds to Clp and abolishes its ability to bind its target gene promoter. Functionally, global transcriptional regulator that regulates virulence factors production by activating or repressing the expression of a large set of genes in diffusible signal factor (DSF) pathway. This chain is CRP-like protein Clp (clp), found in Xanthomonas oryzae pv. oryzae (strain MAFF 311018).